Consider the following 236-residue polypeptide: Cytochrome c biogenesis ATP-binding export protein CcmA (236 aa).

Positions leucine 14 to glutamate 235 constitute an ABC transporter domain. Residue glycine 46–threonine 53 participates in ATP binding.

It belongs to the ABC transporter superfamily. CcmA exporter (TC 3.A.1.107) family. The complex is composed of two ATP-binding proteins (CcmA) and two transmembrane proteins (CcmB).

The protein resides in the cell inner membrane. The enzyme catalyses heme b(in) + ATP + H2O = heme b(out) + ADP + phosphate + H(+). Functionally, part of the ABC transporter complex CcmAB involved in the biogenesis of c-type cytochromes; once thought to export heme, this seems not to be the case, but its exact role is uncertain. Responsible for energy coupling to the transport system. This Alkalilimnicola ehrlichii (strain ATCC BAA-1101 / DSM 17681 / MLHE-1) protein is Cytochrome c biogenesis ATP-binding export protein CcmA.